The chain runs to 629 residues: 1-deoxy-D-xylulose-5-phosphate synthase (629 aa).

Residues His-78 and 119–121 each bind thiamine diphosphate; that span reads AHS. Residue Asp-150 participates in Mg(2+) binding. Residues 151-152, Asn-179, Tyr-286, and Glu-368 each bind thiamine diphosphate; that span reads GA. Asn-179 provides a ligand contact to Mg(2+).

Belongs to the transketolase family. DXPS subfamily. Homodimer. It depends on Mg(2+) as a cofactor. Thiamine diphosphate is required as a cofactor.

The enzyme catalyses D-glyceraldehyde 3-phosphate + pyruvate + H(+) = 1-deoxy-D-xylulose 5-phosphate + CO2. It participates in metabolic intermediate biosynthesis; 1-deoxy-D-xylulose 5-phosphate biosynthesis; 1-deoxy-D-xylulose 5-phosphate from D-glyceraldehyde 3-phosphate and pyruvate: step 1/1. Its function is as follows. Catalyzes the acyloin condensation reaction between C atoms 2 and 3 of pyruvate and glyceraldehyde 3-phosphate to yield 1-deoxy-D-xylulose-5-phosphate (DXP). The polypeptide is 1-deoxy-D-xylulose-5-phosphate synthase (Acidovorax ebreus (strain TPSY) (Diaphorobacter sp. (strain TPSY))).